Reading from the N-terminus, the 391-residue chain is Phosphoglycerate kinase (391 aa).

Substrate-binding positions include 21–23, Arg-36, 59–62, Arg-113, and Arg-146; these read DLN and HLGR. ATP contacts are provided by residues Lys-197, Glu-319, and 345 to 348; that span reads GGDT.

This sequence belongs to the phosphoglycerate kinase family. Monomer.

The protein resides in the cytoplasm. The catalysed reaction is (2R)-3-phosphoglycerate + ATP = (2R)-3-phospho-glyceroyl phosphate + ADP. It functions in the pathway carbohydrate degradation; glycolysis; pyruvate from D-glyceraldehyde 3-phosphate: step 2/5. This is Phosphoglycerate kinase from Colwellia psychrerythraea (strain 34H / ATCC BAA-681) (Vibrio psychroerythus).